Here is a 213-residue protein sequence, read N- to C-terminus: Gas vesicle protein F1 (213 aa).

It belongs to the gas vesicle GvpF/GvpL family. As to quaternary structure, binds GvpA1 in early growth stages; is the only one of GvpF1 to GvpM1 that interacts with GvpA1 in H.volcanii experiments. GvpF to GvpM interact with each other in vitro, and may form multi-subunit complex(es). Interacts with GvpC1 and GvpO1.

Its subcellular location is the gas vesicle. The protein resides in the cytoplasm. Might be involved in preventing aggregation of GvpA1. Proteins GvpF to GvpM might be involved in nucleating gas vesicle formation. A minor component of the gas vesicle, also found in soluble extracts. Gas vesicles are hollow, gas filled proteinaceous nanostructures found in several microbial planktonic microorganisms. They allow positioning of halobacteria at the optimal depth for growth in the poorly aerated, shallow brine pools of their habitat. Its function is as follows. Expression of a 9.5 kb p-vac DNA fragment containing 2 divergently transcribed regions (gvpD-gvpE-gvpF-gvpG-gvpH-gvpI-gvpJ-gvpK-gvpL-gvpM and gvpA-gvpC-gvpN-gvpO) allows H.volcanii to produce gas vesicles. A minimal gas vesicle can be made in H.volcanii by gvpA1-gvpO1 plus gvpF1-gvpG1-gvpJ1-gvpK1-gvpL1-gvpM1; lack of enough GvpJ1 prevents formation. The same region restores gas vesicle production in H.halobium without the p-vac locus. This is Gas vesicle protein F1 (gvpF11) from Halobacterium salinarum (strain ATCC 700922 / JCM 11081 / NRC-1) (Halobacterium halobium).